We begin with the raw amino-acid sequence, 154 residues long: Large ribosomal subunit protein uL23 (154 aa).

This sequence belongs to the universal ribosomal protein uL23 family.

In terms of biological role, this protein binds to a specific region on the 26S rRNA. The chain is Large ribosomal subunit protein uL23 (RPL23A) from Daucus carota (Wild carrot).